We begin with the raw amino-acid sequence, 705 residues long: Glycogen [starch] synthase isoform 2 (705 aa).

Residue R20 participates in UDP binding. A Phosphoserine modification is found at S159. Residues H193 and R199 each coordinate UDP-alpha-D-glucose. Residues H280, E281, Q283, H286, and K290 each contribute to the alpha-D-glucose 6-phosphate site. R320 contributes to the UDP binding site. R320 contributes to the UDP-alpha-D-glucose binding site. S363 and S467 each carry phosphoserine. Alpha-D-glucose 6-phosphate is bound at residue H500. Residues E509, W511, and G512 each coordinate UDP-alpha-D-glucose. T514 is a binding site for UDP. Residues R583 and R587 each coordinate alpha-D-glucose 6-phosphate. Residue S651 is modified to Phosphoserine. S655 is modified (phosphoserine; by PHO85). S661 and S663 each carry phosphoserine; by PKA. T668 carries the phosphothreonine; by PHO85 modification. The tract at residues 686–705 (SLGVNPAADDDDDGPYADDS) is disordered. Acidic residues predominate over residues 693-705 (ADDDDDGPYADDS).

It belongs to the glycosyltransferase 3 family. Interacts with PCL10. In terms of processing, phosphorylated by the cyclin-CDK PCL10-PHO85. Phosphorylation causes inactivation of enzyme.

The protein localises to the cytoplasm. Its subcellular location is the cytosol. The catalysed reaction is [(1-&gt;4)-alpha-D-glucosyl](n) + UDP-alpha-D-glucose = [(1-&gt;4)-alpha-D-glucosyl](n+1) + UDP + H(+). Its pathway is glycan biosynthesis; glycogen biosynthesis. With respect to regulation, allosteric activation by glucose-6-phosphate, and phosphorylation by a cAMP-dependent kinase. Functionally, glycogen synthase participates in the glycogen biosynthetic process along with glycogenin and glycogen branching enzyme. Extends the primer composed of a few glucose units formed by glycogenin by adding new glucose units to it. In this context, glycogen synthase transfers the glycosyl residue from UDP-Glc to the non-reducing end of alpha-1,4-glucan. In Saccharomyces cerevisiae (strain ATCC 204508 / S288c) (Baker's yeast), this protein is Glycogen [starch] synthase isoform 2 (GSY2).